A 309-amino-acid polypeptide reads, in one-letter code: MAGPAFRAAAVRVRVPATSANLGPGFDALGLALGLYDDVVVRVADSGLHIDIAGEGSETLPRDEKHLLVRSLRTAFDLLGGQPRGLEIVCANRIPHGRGLGSSSAAICAGIVAARAVTIGGEARLDDAALLDLATEIEGHPDNVAACLLGGFTLSWMESGAARAIRMEPSDSIVPVVFVPGKPVLTQTARGLLPRSVPHVDAAANAGRAALLVEALTRRPELLLPATEDRLHQEYRAPAMPESTALVERLRGDGIPAVISGAGPTVMALADADTADKVEALAGTDWAANRLGLDQQGATVLPLATASDT.

95–105 contacts ATP; that stretch reads PHGRGLGSSSA.

It belongs to the GHMP kinase family. Homoserine kinase subfamily.

It localises to the cytoplasm. It carries out the reaction L-homoserine + ATP = O-phospho-L-homoserine + ADP + H(+). Its pathway is amino-acid biosynthesis; L-threonine biosynthesis; L-threonine from L-aspartate: step 4/5. Catalyzes the ATP-dependent phosphorylation of L-homoserine to L-homoserine phosphate. This is Homoserine kinase from Streptomyces coelicolor (strain ATCC BAA-471 / A3(2) / M145).